A 622-amino-acid chain; its full sequence is Glutamyl-tRNA(Gln) amidotransferase subunit B, mitochondrial (622 aa).

A mitochondrion-targeting transit peptide spans 1 to 54 (MSRIPTRELGRYLLQGQICQRGCVASSVSKSRAKQLGRHPLLPHDRHQPTQARH). Residues 30–67 (KSRAKQLGRHPLLPHDRHQPTQARHAHTVTTTATPTQL) are disordered. The segment covering 57–67 (TVTTTATPTQL) has biased composition (low complexity).

It belongs to the GatB/GatE family. GatB subfamily. As to quaternary structure, subunit of the heterotrimeric GatCAB amidotransferase (AdT) complex, composed of A, B and C subunits.

Its subcellular location is the mitochondrion. It carries out the reaction L-glutamyl-tRNA(Gln) + L-glutamine + ATP + H2O = L-glutaminyl-tRNA(Gln) + L-glutamate + ADP + phosphate + H(+). Allows the formation of correctly charged Gln-tRNA(Gln) through the transamidation of misacylated Glu-tRNA(Gln) in the mitochondria. The reaction takes place in the presence of glutamine and ATP through an activated gamma-phospho-Glu-tRNA(Gln). The polypeptide is Glutamyl-tRNA(Gln) amidotransferase subunit B, mitochondrial (Verticillium alfalfae (strain VaMs.102 / ATCC MYA-4576 / FGSC 10136) (Verticillium wilt of alfalfa)).